Here is a 134-residue protein sequence, read N- to C-terminus: Large ribosomal subunit protein uL14 (134 aa).

The protein belongs to the universal ribosomal protein uL14 family. In the 70S ribosome, L14 and L19 interact and together make contacts with the 16S rRNA in bridges B5 and B8. Part of the 50S ribosomal subunit. Forms a cluster with proteins L3 and L19.

In terms of biological role, forms part of two intersubunit bridges in the 70S ribosome. Binds to 23S rRNA. The sequence is that of Large ribosomal subunit protein uL14 from Deinococcus radiodurans (strain ATCC 13939 / DSM 20539 / JCM 16871 / CCUG 27074 / LMG 4051 / NBRC 15346 / NCIMB 9279 / VKM B-1422 / R1).